A 643-amino-acid chain; its full sequence is Transcription elongation factor B polypeptide 3 (643 aa).

The 74-residue stretch at 9-82 (DVVRHYQRSI…TKWKAMVAKE (74 aa)) folds into the TFIIS N-terminal domain. 2 disordered regions span residues 86–289 (IAST…MGAN) and 302–351 (SSKK…SKKP). Positions 94–106 (HNEEDSGKTKSSD) are enriched in basic and acidic residues. A compositionally biased stretch (polar residues) spans 114–124 (KGGNSSSGEDL). Serine 120 is subject to Phosphoserine. Basic residues predominate over residues 127–136 (SKHKSKHAKS). 2 stretches are compositionally biased toward basic and acidic residues: residues 164-198 (HDKS…KDSS) and 207-237 (SKSE…VKDK). The segment covering 238-255 (SSKHKSSSSKSSKRSHSP) has biased composition (basic residues). A compositionally biased stretch (low complexity) spans 302-336 (SSKKSSSNSKSKFVAKPTAAPSSSALSAPTTAGSS). Positions 413 to 571 (AQGISSKTMR…PPRSVQRKQE (159 aa)) are activation domain. Residues 439–448 (SLFDLCTRVL) form an interacting with Elongin BC complex region.

The protein localises to the nucleus. In terms of biological role, SIII, also known as elongin, is a general transcription elongation factor that increases the RNA polymerase II transcription elongation past template-encoded arresting sites. Subunit A is transcriptionally active and its transcription activity is strongly enhanced by binding to the dimeric complex of the SIII regulatory subunits B and C (elongin BC complex). May play an important role in metamorphosis. This chain is Transcription elongation factor B polypeptide 3 (EloA), found in Drosophila melanogaster (Fruit fly).